We begin with the raw amino-acid sequence, 393 residues long: S-adenosylmethionine synthase (393 aa).

Glutamate 9 contacts Mg(2+). Position 15 (histidine 15) interacts with ATP. Aspartate 17 contacts Mg(2+). Glutamate 43 is a binding site for K(+). L-methionine is bound by residues glutamate 56 and glutamine 99. ATP-binding positions include aspartate 167–lysine 169, serine 235–phenylalanine 238, aspartate 246, arginine 252–lysine 253, alanine 269, lysine 273, and lysine 277. Residue aspartate 246 participates in L-methionine binding. Lysine 277 lines the L-methionine pocket.

This sequence belongs to the AdoMet synthase family. Homotetramer; dimer of dimers. Requires Mn(2+) as cofactor. Mg(2+) serves as cofactor. Co(2+) is required as a cofactor. It depends on K(+) as a cofactor.

The protein resides in the cytoplasm. It catalyses the reaction L-methionine + ATP + H2O = S-adenosyl-L-methionine + phosphate + diphosphate. Its pathway is amino-acid biosynthesis; S-adenosyl-L-methionine biosynthesis; S-adenosyl-L-methionine from L-methionine: step 1/1. With respect to regulation, increased activity in the presence of 25 percent acetonitrile, methanol or dimethylformamide. In terms of biological role, catalyzes the formation of S-adenosylmethionine from methionine and ATP. This Acacia koa (Koa tree) protein is S-adenosylmethionine synthase.